Consider the following 433-residue polypeptide: Histidine--tRNA ligase (433 aa).

The protein belongs to the class-II aminoacyl-tRNA synthetase family. Homodimer.

It localises to the cytoplasm. It carries out the reaction tRNA(His) + L-histidine + ATP = L-histidyl-tRNA(His) + AMP + diphosphate + H(+). The polypeptide is Histidine--tRNA ligase (Azoarcus sp. (strain BH72)).